A 473-amino-acid polypeptide reads, in one-letter code: SHC-transforming protein 1 (473 aa).

The disordered stretch occupies residues 1 to 26 (MNKLSGGGGRRTRVEGGQLGGEEWTR). Residue S29 is modified to Phosphoserine. K44 bears the N6-acetyllysine mark. The PID domain maps to 46–229 (MGPGVSYLVR…AGFDGSAWDE (184 aa)). The interval 216-314 (HDRMAGFDGS…PSSGRELFDD (99 aa)) is disordered. Positions 230–377 (EEEEPPDHQY…AMAEQLRGEP (148 aa)) are CH1. Phosphotyrosine is present on residues Y239, Y240, and Y317. Residues 328-348 (QAGAGAGPPNPTINGSAPRDL) are disordered. Phosphoserine is present on S343. The SH2 domain occupies 378–469 (WFHGKLSRRE…GSELCLQQPV (92 aa)).

Interacts with CPNE3; this interaction may mediate the binding of CPNE3 with ERBB2. Interacts with the Trk receptors NTRK1, NTRK2 and NTRK3; in a phosphotyrosine-dependent manner. Interacts with the NPXY motif of tyrosine-phosphorylated IGF1R and INSR in vitro via the PID domain. Once activated, binds to GRB2. Interacts with tyrosine-phosphorylated CD3T and DDR2. Interacts with the N-terminal region of APS. Interacts with phosphorylated LRP1 and IRS4. Interacts with INPP5D/SHIP1 and INPPL1/SHIP2. Interacts with ALK, GAB2, GRB7 and KIT. Interacts with PTPN6/SHP (tyrosine phosphorylated). Identified in a complex containing FGFR4, NCAM1, CDH2, PLCG1, FRS2, SRC, SHC1, GAP43 and CTTN. Interacts with FLT4 (tyrosine-phosphorylated). Interacts with EPHB1 and GRB2; activates the MAPK/ERK cascade to regulate cell migration. Interacts with PDGFRB (tyrosine-phosphorylated). Interacts with ERBB4. Interacts with TEK/TIE2 (tyrosine-phosphorylated). Interacts with PTK2/FAK1. Interacts with CEACAM1; this interaction is CEACAM1-phosphorylation-dependent and mediates interaction with EGFR or INSR resulting in decrease coupling of SHC1 to the MAPK3/ERK1-MAPK1/ERK2 pathway. Interacts (via PID domain) with PEAK1 (when phosphorylated). Found in a complex with PPP1CA, PPP1CC, SHC1 and PEAK1. In terms of processing, phosphorylated by activated epidermal growth factor receptor. Phosphorylated in response to KIT signaling. Tyrosine phosphorylated in response to FLT3 and FLT4 signaling and by ligand-activated ALK. Tyrosine phosphorylated by ligand-activated PDGFRB. Tyrosine phosphorylated by TEK/TIE2. May be tyrosine phosphorylated by activated PTK2/FAK1. Tyrosine phosphorylated by activated PTK2B/PYK2. Dephosphorylation by PTPN2 may regulate interaction with GRB2.

It localises to the cytoplasm. The protein localises to the cell junction. The protein resides in the focal adhesion. In terms of biological role, signaling adapter that couples activated growth factor receptors to signaling pathways. Participates in a signaling cascade initiated by activated KIT and KITLG/SCF. Participates in signaling downstream of the angiopoietin receptor TEK/TIE2, and plays a role in the regulation of endothelial cell migration and sprouting angiogenesis. This Bos taurus (Bovine) protein is SHC-transforming protein 1 (SHC1).